The following is a 539-amino-acid chain: Phosphoenolpyruvate carboxykinase (ATP) (539 aa).

Substrate contacts are provided by Arg-64, Tyr-206, and Lys-212. Residues Lys-212, His-231, and 247–255 (GLSGTGKTT) contribute to the ATP site. 2 residues coordinate Mn(2+): Lys-212 and His-231. A Mn(2+)-binding site is contributed by Asp-268. Residues Glu-296, Arg-332, 448–449 (RI), and Thr-454 contribute to the ATP site. Arg-332 contacts substrate.

The protein belongs to the phosphoenolpyruvate carboxykinase (ATP) family. In terms of assembly, monomer. Requires Mn(2+) as cofactor.

Its subcellular location is the cytoplasm. It catalyses the reaction oxaloacetate + ATP = phosphoenolpyruvate + ADP + CO2. It functions in the pathway carbohydrate biosynthesis; gluconeogenesis. Involved in the gluconeogenesis. Catalyzes the conversion of oxaloacetate (OAA) to phosphoenolpyruvate (PEP) through direct phosphoryl transfer between the nucleoside triphosphate and OAA. This is Phosphoenolpyruvate carboxykinase (ATP) from Yersinia enterocolitica serotype O:8 / biotype 1B (strain NCTC 13174 / 8081).